The primary structure comprises 388 residues: Alanine racemase 1 (388 aa).

The active-site Proton acceptor; specific for D-alanine is Lys40. Lys40 carries the N6-(pyridoxal phosphate)lysine modification. A substrate-binding site is contributed by Arg138. The active-site Proton acceptor; specific for L-alanine is Tyr268. Substrate is bound at residue Met316.

This sequence belongs to the alanine racemase family. Pyridoxal 5'-phosphate is required as a cofactor.

The enzyme catalyses L-alanine = D-alanine. It functions in the pathway amino-acid biosynthesis; D-alanine biosynthesis; D-alanine from L-alanine: step 1/1. Its function is as follows. Catalyzes the interconversion of L-alanine and D-alanine. May also act on other amino acids. This Caldanaerobacter subterraneus subsp. tengcongensis (strain DSM 15242 / JCM 11007 / NBRC 100824 / MB4) (Thermoanaerobacter tengcongensis) protein is Alanine racemase 1 (alr1).